A 235-amino-acid chain; its full sequence is Kinetochore protein Spc25 (235 aa).

A coiled-coil region spans residues 44–106 (KNILSAKEAI…DMEAQLLRHT (63 aa)). Positions 193 to 216 (EVAGASPVTPSGSERPKATSKHSN) are disordered.

Belongs to the SPC25 family. Component of the Ndc80 complex, which is composed of Ndc80, Nuf2 and Spc25.

The protein resides in the nucleus. It is found in the chromosome. It localises to the centromere. The protein localises to the kinetochore. Its function is as follows. Acts as a component of the essential kinetochore-associated Ndc80 complex, which is required for chromosome segregation and spindle checkpoint activity during meiosis and mitosis. Required for kinetochore integrity and the organization of stable microtubule binding sites in the outer plate of the kinetochore. Participates in SAC signaling that responds specifically to disruptions in spindle microtubule dynamics. The NDC80 complex synergistically enhances the affinity of the SKA1 complex for microtubules and may allow the NDC80 complex to track depolymerizing microtubules. The sequence is that of Kinetochore protein Spc25 from Drosophila pseudoobscura pseudoobscura (Fruit fly).